The primary structure comprises 496 residues: Hexokinase-1 (496 aa).

A helical membrane pass occupies residues valine 4–valine 24. The 453-residue stretch at glycine 35–alanine 487 folds into the Hexokinase domain. The segment at serine 90–valine 228 is hexokinase small subdomain. Residues glycine 104, threonine 105, and asparagine 106 each coordinate ADP. D-glucose contacts are provided by threonine 194, lysine 195, asparagine 229, and aspartate 230. The segment at asparagine 229 to aspartate 476 is hexokinase large subdomain. Residue threonine 253 coordinates ADP. D-glucose-binding residues include asparagine 256, glutamate 284, and glutamate 315. Residue glycine 441 coordinates ADP.

The protein belongs to the hexokinase family. In terms of assembly, interacts with RPT5B in nucleus. Interacts with RHIP1. Interacts with KING1 in mitochondria. Interacts with CLF (via SANT domain) and EZA1/SWN (via SANT domain) in nucleus. As to expression, highly expressed in flowers and siliques, at intermediate levels in roots and stems, and at lower levels in rosette and cauline leaves.

It localises to the mitochondrion outer membrane. The protein localises to the nucleus. It catalyses the reaction a D-hexose + ATP = a D-hexose 6-phosphate + ADP + H(+). The enzyme catalyses D-fructose + ATP = D-fructose 6-phosphate + ADP + H(+). The catalysed reaction is D-glucose + ATP = D-glucose 6-phosphate + ADP + H(+). It participates in carbohydrate metabolism; hexose metabolism. It functions in the pathway carbohydrate degradation; glycolysis; D-glyceraldehyde 3-phosphate and glycerone phosphate from D-glucose: step 1/4. Its function is as follows. Fructose and glucose phosphorylating enzyme. May be involved in the phosphorylation of glucose during the export from mitochondrion to cytosol. Acts as a sugar sensor which may regulate sugar-dependent gene repression or activation. Mediates the effects of sugar on plant growth and development independently of its catalytic activity or the sugar metabolism. May regulate the execution of program cell death in plant cells. Promotes roots and leaves growth. Together with sugar, is involved in the regulation of the expression of aquaporin genes, and reduces leaf water conductance, to coordinate sugar levels with the loss of water through transpiration. Regulates cell proliferation and expansion early during leaf development. Involved in sucrose-induced leaf growth stimulation independently of GPT2. May participate to the stimulation of hypocotyl elongation under long-day (LD) conditions. Forms a nuclear complex with CLF and EZA1/SWN to target common glucose-responsive genes and regulate glucose signaling. Is required for CLF- and EZA1/SWN-mediated histone H3 trimethylation on 'Lys-27' (H3K27me3) and glucose-mediated gene repression. The chain is Hexokinase-1 from Arabidopsis thaliana (Mouse-ear cress).